The chain runs to 509 residues: Maturase K (509 aa).

The protein belongs to the intron maturase 2 family. MatK subfamily.

It is found in the plastid. Its subcellular location is the chloroplast. Usually encoded in the trnK tRNA gene intron. Probably assists in splicing its own and other chloroplast group II introns. The chain is Maturase K from Hottonia palustris (Water-violet).